The primary structure comprises 409 residues: Argininosuccinate synthase (409 aa).

ATP-binding positions include 15–23 (AYSGGLDTS) and alanine 42. L-citrulline-binding residues include tyrosine 93 and serine 98. Glycine 123 lines the ATP pocket. The L-aspartate site is built by threonine 125, asparagine 129, and aspartate 130. Asparagine 129 contacts L-citrulline. Residues arginine 133, serine 182, serine 191, glutamate 267, and tyrosine 279 each contribute to the L-citrulline site.

Belongs to the argininosuccinate synthase family. Type 1 subfamily. In terms of assembly, homotetramer.

The protein resides in the cytoplasm. It carries out the reaction L-citrulline + L-aspartate + ATP = 2-(N(omega)-L-arginino)succinate + AMP + diphosphate + H(+). It functions in the pathway amino-acid biosynthesis; L-arginine biosynthesis; L-arginine from L-ornithine and carbamoyl phosphate: step 2/3. The sequence is that of Argininosuccinate synthase from Desulfitobacterium hafniense (strain Y51).